The following is a 328-amino-acid chain: DNA-directed RNA polymerase subunit alpha (328 aa).

Positions 1–232 (MSTQGFLKPR…DQISVFAALE (232 aa)) are alpha N-terminal domain (alpha-NTD). The tract at residues 248–328 (IDPVLLRPVD…NWPPLGLERP (81 aa)) is alpha C-terminal domain (alpha-CTD).

The protein belongs to the RNA polymerase alpha chain family. In terms of assembly, homodimer. The RNAP catalytic core consists of 2 alpha, 1 beta, 1 beta' and 1 omega subunit. When a sigma factor is associated with the core the holoenzyme is formed, which can initiate transcription.

It catalyses the reaction RNA(n) + a ribonucleoside 5'-triphosphate = RNA(n+1) + diphosphate. In terms of biological role, DNA-dependent RNA polymerase catalyzes the transcription of DNA into RNA using the four ribonucleoside triphosphates as substrates. This Bordetella petrii (strain ATCC BAA-461 / DSM 12804 / CCUG 43448) protein is DNA-directed RNA polymerase subunit alpha.